The primary structure comprises 267 residues: Apolipoprotein A-I (267 aa).

A signal peptide spans 1–18 (MKAAVLTLAVLFLTGSQA). Repeat copies occupy residues 68–89 (LKLL…EQLG) and 90–111 (PVTQ…QEMS). Residues 68–267 (LKLLDNWDSV…EEYTKKLNTQ (200 aa)) form a 10 X approximate tandem repeats region. Met-110 carries the post-translational modification Methionine sulfoxide. The 3; half-length repeat unit spans residues 112 to 122 (KDLEEVKAKVQ). Repeat copies occupy residues 123–144 (PYLD…QKVE), 145–166 (PLRA…EKLS), 167–188 (PLGE…THLA), 189–210 (PYSD…ENGG), and 211–232 (ARLA…EKAK). Residue Met-136 is modified to Methionine sulfoxide. The 9; half-length repeat unit spans residues 233–243 (PALEDLRQGLL). Repeat 10 spans residues 244–267 (PVLESFKVSFLSALEEYTKKLNTQ).

It belongs to the apolipoprotein A1/A4/E family. Homodimer. Interacts with APOA1BP and CLU. Component of a sperm activating protein complex (SPAP), consisting of APOA1, an immunoglobulin heavy chain, an immunoglobulin light chain and albumin. Interacts with NDRG1. Interacts with SCGB3A2. Interacts with NAXE and YJEFN3. Glycosylated. In terms of processing, palmitoylated. Post-translationally, phosphorylation sites are present in the extracellular medium. In terms of tissue distribution, major protein of plasma HDL, also found in chylomicrons.

It localises to the secreted. Its function is as follows. Participates in the reverse transport of cholesterol from tissues to the liver for excretion by promoting cholesterol efflux from tissues and by acting as a cofactor for the lecithin cholesterol acyltransferase (LCAT). As part of the SPAP complex, activates spermatozoa motility. The polypeptide is Apolipoprotein A-I (APOA1) (Pan troglodytes (Chimpanzee)).